The primary structure comprises 292 residues: Poly-beta-1,6-N-acetyl-D-glucosamine N-deacetylase (292 aa).

The N-terminal stretch at 1 to 28 (MKYRKFIILVLSILIILPVSTLDGHHIA) is a signal peptide. In terms of domain architecture, NodB homology spans 114-292 (RSVWINFDDM…WDGFHEKDET (179 aa)).

It belongs to the polysaccharide deacetylase family.

The protein localises to the secreted. It is found in the cell wall. Functionally, catalyzes the N-deacetylation of poly-beta-1,6-N-acetyl-D-glucosamine (PNAG, also referred to as PIA), a biofilm adhesin polysaccharide. N-deacetylation is crucial for attachment of the polysaccharide to the bacterial cell surface; it leads to the introduction of positive charges in the otherwise neutral PIA polymer, allowing electrostatic interactions. This is Poly-beta-1,6-N-acetyl-D-glucosamine N-deacetylase (icaB) from Staphylococcus aureus (strain COL).